The primary structure comprises 260 residues: Late transcription factor 1 (260 aa).

It belongs to the chordopoxvirinae VLTF-1 family. Interacts with the late transcription factors VLTF-2 and VLTF-3. Interacts with the late transcription elongation factor VLTF-4. Interacts with itself.

Its function is as follows. Associates with RNA polymerase to initiate transcription from late gene promoters. The chain is Late transcription factor 1 (OPG093) from Homo sapiens (Human).